The sequence spans 589 residues: MTQLSEPVPVSLAARRSLWQRVARVWPYFSGSRAGWALAIGATIVASATEPFVPALLKPLLDRGFQRDSFNLWLVPLALMLLFTVRGLSGFLAQFALAKVTNDGLLKLRGAMFDKLLSARLTLFADQSSSAIANTVVYEVFNGSSMLINAIMKLARDVLTLLALIGYLVYLNWKLMLVVALLFPAVAFVIQVLSKRLYRLTKESQTATDDLAYVVEENVMAHRDVRLHGAQAGQASRFNHLSNSLRRLSMKSTAAYAGMSAITQVLAAMALSAVISIALLQSAENTTTVGGFVAFVTAMLLLIAPVKSLSDAATPVTRGLAALERGLDLMNLTPDESGGSFVKARAHGDIEFADVSVIYKADAAAALDQFSLSIKAGETLAIVGASGSGKTTLVNLLPRFVEMSSGNIYLDGQDLRAWNLASLRAQFAFVSQHVVMLNNSIAVNVALGQPVDRARVTECLAAANLSGLLAELPGGIDTILGHNAMQLSGGQRQRLAIARALYKNAPILVLDEATSALDTESELAVQEAIKRLTASRTSLVIAHRLSTVQHADRIIMMEAGRMIESGTHAELLARNGAYAHLYRLGFRNT.

The next 6 membrane-spanning stretches (helical) occupy residues 37-57, 72-92, 151-171, 173-193, 260-280, and 286-306; these read ALAI…PALL, LWLV…SGFL, IMKL…LVYL, WKLM…IQVL, SAIT…IALL, and TTTV…IAPV. The ABC transmembrane type-1 domain maps to 37–318; the sequence is ALAIGATIVA…LSDAATPVTR (282 aa). Residues 350–584 enclose the ABC transporter domain; it reads IEFADVSVIY…NGAYAHLYRL (235 aa). ATP is bound at residue 384–391; it reads GASGSGKT.

Belongs to the ABC transporter superfamily. Lipid exporter (TC 3.A.1.106) family. In terms of assembly, homodimer.

The protein resides in the cell inner membrane. It carries out the reaction ATP + H2O + lipid A-core oligosaccharideSide 1 = ADP + phosphate + lipid A-core oligosaccharideSide 2.. Functionally, involved in lipopolysaccharide (LPS) biosynthesis. Translocates lipid A-core from the inner to the outer leaflet of the inner membrane. Transmembrane domains (TMD) form a pore in the inner membrane and the ATP-binding domain (NBD) is responsible for energy generation. This Polaromonas sp. (strain JS666 / ATCC BAA-500) protein is ATP-dependent lipid A-core flippase.